The chain runs to 187 residues: Coiled-coil domain-containing protein 201 (187 aa).

2 disordered regions span residues 1–79 (MEPG…PPAT) and 92–159 (KESS…RAAA). Positions 111 to 131 (LTQRQRQRQQQQQQQESLRAK) form a coiled coil. The segment covering 147-157 (GRKRRDPKKRA) has biased composition (basic residues).

This chain is Coiled-coil domain-containing protein 201, found in Homo sapiens (Human).